Reading from the N-terminus, the 329-residue chain is Putative 1-aminocyclopropane-1-carboxylate deaminase (329 aa).

An N6-(pyridoxal phosphate)lysine modification is found at lysine 54.

Belongs to the ACC deaminase/D-cysteine desulfhydrase family. Requires pyridoxal 5'-phosphate as cofactor.

The catalysed reaction is 1-aminocyclopropane-1-carboxylate + H2O = 2-oxobutanoate + NH4(+). This is Putative 1-aminocyclopropane-1-carboxylate deaminase from Pyrococcus furiosus (strain ATCC 43587 / DSM 3638 / JCM 8422 / Vc1).